The primary structure comprises 415 residues: Casein kinase 1-like protein 3 (415 aa).

One can recognise a Protein kinase domain in the interval 9–277; it reads YKLGRKIGGG…FLKRLFRDLF (269 aa). Residues 15-23 and K38 contribute to the ATP site; that span reads IGGGSFGEI. D128 serves as the catalytic Proton acceptor. Polar residues-rich tracts occupy residues 303-314 and 373-415; these read NQSQAVPGSSNP and NMPS…SPEK. Disordered stretches follow at residues 303-330 and 344-415; these read NQSQ…GPNI and NAIG…SPEK.

Belongs to the protein kinase superfamily. CK1 Ser/Thr protein kinase family. Casein kinase I subfamily. Slightly autophosphorylated. As to expression, expressed in seedlings, stems, leaves and flowers.

Its subcellular location is the cytoplasm. It localises to the nucleus. It carries out the reaction L-seryl-[protein] + ATP = O-phospho-L-seryl-[protein] + ADP + H(+). The catalysed reaction is L-threonyl-[protein] + ATP = O-phospho-L-threonyl-[protein] + ADP + H(+). Protein kinase involved in blue light responses (e.g. hypocotyl elongation and flowering) by phosphorylating CRY2 to reduce its stability. The polypeptide is Casein kinase 1-like protein 3 (Arabidopsis thaliana (Mouse-ear cress)).